Consider the following 189-residue polypeptide: Molybdenum cofactor guanylyltransferase (189 aa).

GTP-binding positions include 12–14 (LAG), Lys-24, Asp-68, and Asp-94. Residue Asp-94 coordinates Mg(2+).

The protein belongs to the MobA family. Monomer. Mg(2+) is required as a cofactor.

The protein localises to the cytoplasm. The enzyme catalyses Mo-molybdopterin + GTP + H(+) = Mo-molybdopterin guanine dinucleotide + diphosphate. Its function is as follows. Transfers a GMP moiety from GTP to Mo-molybdopterin (Mo-MPT) cofactor (Moco or molybdenum cofactor) to form Mo-molybdopterin guanine dinucleotide (Mo-MGD) cofactor. The sequence is that of Molybdenum cofactor guanylyltransferase from Xanthomonas euvesicatoria pv. vesicatoria (strain 85-10) (Xanthomonas campestris pv. vesicatoria).